A 737-amino-acid polypeptide reads, in one-letter code: Glycogen [starch] synthase, muscle (737 aa).

Ser-8 is modified (phosphoserine; by AMPK and PKA). A Phosphoserine modification is found at Ser-11. Lys-39 is a UDP binding site. Residues His-205 and Arg-211 each coordinate UDP-alpha-D-glucose. Alpha-D-glucose 6-phosphate-binding residues include His-291, Glu-292, Gln-294, His-297, and Lys-301. Arg-331 is a binding site for UDP. Residue Arg-331 participates in UDP-alpha-D-glucose binding. Ser-412 is subject to Phosphoserine. His-501 contacts alpha-D-glucose 6-phosphate. Positions 510, 512, and 513 each coordinate UDP-alpha-D-glucose. Position 515 (Thr-515) interacts with UDP. Residues Arg-582 and Arg-586 each contribute to the alpha-D-glucose 6-phosphate site. The interval Tyr-634–Asn-737 is disordered. At Ser-641 the chain carries Phosphoserine; by DYRK2, GSK3-alpha, GSK3-beta and PASK. Phosphoserine; by GSK3-alpha and GSK3-beta occurs at positions 645 and 649. Residue Ser-652 is modified to Phosphoserine. Phosphoserine; by GSK3-alpha and GSK3-beta is present on Ser-653. Residue Ser-657 is modified to Phosphoserine; by CK2. Over residues Glu-658–Ala-681 the composition is skewed to acidic residues. A compositionally biased stretch (basic and acidic residues) spans Ala-682 to Arg-695. Ser-698 is modified (phosphoserine). Positions Ser-698–Ala-714 are enriched in polar residues. Position 700 is a phosphothreonine (Thr-700). Ser-710 is subject to Phosphoserine. Over residues Thr-715–Asn-737 the composition is skewed to low complexity. Thr-721 is modified (phosphothreonine). Ser-727 and Ser-731 each carry phosphoserine.

The protein belongs to the glycosyltransferase 3 family. In terms of assembly, part of the GYS1-GYG1 complex, a heterooctamer composed of a tetramer of GYS1 and 2 dimers of GYG1, where each GYS1 protomer binds to one GYG1 subunit (via GYG1 C-terminus); the GYS1 tetramer may dissociate from GYG1 dimers to continue glycogen polymerization on its own. Post-translationally, phosphorylation at Ser-8 by AMPK inactivates the enzyme activity. Primed phosphorylation at Ser-657 (site 5) by CSNK2A1 and CSNK2A2 is required for inhibitory phosphorylation at Ser-641 (site 3a), Ser-645 (site 3b), Ser-649 (site 3c) and Ser-653 (site 4) by GSK3A an GSK3B. Phosphorylated at Ser-641 by PASK, leading to inactivation; phosphorylation by PASK is inhibited by glycogen. Phosphorylated at Ser-641 by DYRK2, leading to inactivation. Dephosphorylation at Ser-641 and Ser-645 by PP1 activates the enzyme.

It catalyses the reaction [(1-&gt;4)-alpha-D-glucosyl](n) + UDP-alpha-D-glucose = [(1-&gt;4)-alpha-D-glucosyl](n+1) + UDP + H(+). It participates in glycan biosynthesis; glycogen biosynthesis. Its activity is regulated as follows. Allosteric activation by glucose-6-phosphate. Phosphorylation reduces the activity towards UDP-glucose. When in the non-phosphorylated state, glycogen synthase does not require glucose-6-phosphate as an allosteric activator; when phosphorylated it does. Functionally, glycogen synthase participates in the glycogen biosynthetic process along with glycogenin and glycogen branching enzyme. Extends the primer composed of a few glucose units formed by glycogenin by adding new glucose units to it. In this context, glycogen synthase transfers the glycosyl residue from UDP-Glc to the non-reducing end of alpha-1,4-glucan. The polypeptide is Glycogen [starch] synthase, muscle (GYS1) (Pongo abelii (Sumatran orangutan)).